We begin with the raw amino-acid sequence, 356 residues long: Phosphotriesterase-related protein (356 aa).

Residues His23, His25, Glu175, His207, His236, and Asp304 each coordinate a divalent metal cation.

This sequence belongs to the metallo-dependent hydrolases superfamily. Phosphotriesterase family. It depends on a divalent metal cation as a cofactor.

The protein is Phosphotriesterase-related protein of Aedes aegypti (Yellowfever mosquito).